The primary structure comprises 189 residues: Parkinson disease protein 7 (189 aa).

Ala-2 is modified (N-acetylalanine). Residues Cys-46 and Cys-53 are each lipidated (S-palmitoyl cysteine). Phosphotyrosine is present on Tyr-67. The Nucleophile role is filled by Cys-106. Residue Cys-106 is modified to Cysteine sulfinic acid (-SO2H); alternate. The S-palmitoyl cysteine; alternate moiety is linked to residue Cys-106. His-126 is an active-site residue. Lys-130 participates in a covalent cross-link: Glycyl lysine isopeptide (Lys-Gly) (interchain with G-Cter in SUMO). Lys-148 bears the N6-acetyllysine mark. Lys-182 bears the N6-succinyllysine mark.

This sequence belongs to the peptidase C56 family. Homodimer. Binds EFCAB6/DJBP and PIAS2. Part of a ternary complex containing PARK7, EFCAB6/DJBP and AR. Interacts (via N-terminus) with OTUD7B. Interacts with BBS1, HIPK1, CLCF1 and MTERF. Forms a complex with PINK1 and PRKN. Interacts (via C-terminus) with NCF1; the interaction is enhanced by LPS and modulates NCF1 phosphorylation and membrane translocation. Interacts with NENF. Requires Deglycase activity does not require glutathione as a cofactor, however, glycated glutathione constitutes a PARK7 substrate. as cofactor. Sumoylated on Lys-130 by PIAS2 or PIAS4; which is enhanced after ultraviolet irradiation and essential for cell-growth promoting activity and transforming activity. Post-translationally, cys-106 is easily oxidized to sulfinic acid. In terms of processing, undergoes cleavage of a C-terminal peptide and subsequent activation of protease activity in response to oxidative stress. As to expression, highly expressed in pancreas, kidney, skeletal muscle, liver, testis and heart. Detected at slightly lower levels in placenta and brain (at protein level). Detected in astrocytes, Sertoli cells, spermatogonia, spermatids and spermatozoa. Expressed by pancreatic islets at higher levels than surrounding exocrine tissues.

It is found in the cell membrane. Its subcellular location is the cytoplasm. The protein resides in the nucleus. The protein localises to the membrane raft. It localises to the mitochondrion. It is found in the endoplasmic reticulum. It catalyses the reaction N(omega)-(1-hydroxy-2-oxopropyl)-L-arginyl-[protein] + H2O = lactate + L-arginyl-[protein] + H(+). The enzyme catalyses N(6)-(1-hydroxy-2-oxopropyl)-L-lysyl-[protein] + H2O = lactate + L-lysyl-[protein] + H(+). It carries out the reaction S-(1-hydroxy-2-oxopropyl)-L-cysteinyl-[protein] + H2O = lactate + L-cysteinyl-[protein] + H(+). The catalysed reaction is N(omega)-(1-hydroxy-2-oxoethyl)-L-arginyl-[protein] + H2O = L-arginyl-[protein] + glycolate + H(+). It catalyses the reaction N(6)-(1-hydroxy-2-oxoethyl)-L-lysyl-[protein] + H2O = glycolate + L-lysyl-[protein] + H(+). The enzyme catalyses S-(1-hydroxy-2-oxoethyl)-L-cysteinyl-[protein] + H2O = glycolate + L-cysteinyl-[protein] + H(+). It carries out the reaction N(2)-(1-hydroxy-2-oxopropyl)-dGTP + H2O = lactate + dGTP + H(+). The catalysed reaction is N(2)-(1-hydroxy-2-oxopropyl)-GTP + H2O = lactate + GTP + H(+). It catalyses the reaction N(2)-(1-hydroxy-2-oxopropyl)-GDP + H2O = lactate + GDP + H(+). The enzyme catalyses N(2)-(1-hydroxy-2-oxopropyl)-GMP + H2O = lactate + GMP + H(+). It carries out the reaction N(2)-(1-hydroxy-2-oxoethyl)-dGTP + H2O = dGTP + glycolate + H(+). The catalysed reaction is N(2)-(1-hydroxy-2-oxoethyl)-GTP + H2O = glycolate + GTP + H(+). It catalyses the reaction N(2)-(1-hydroxy-2-oxoethyl)-GDP + H2O = glycolate + GDP + H(+). The enzyme catalyses N(2)-(1-hydroxy-2-oxoethyl)-GMP + H2O = glycolate + GMP + H(+). It carries out the reaction an N(2)-(1-hydroxy-2-oxopropyl)-guanosine in RNA + H2O = a guanosine in RNA + lactate + H(+). The catalysed reaction is an N(2)-(1-hydroxy-2-oxopropyl)-2'-deoxyguanosine in DNA + H2O = a 2'-deoxyguanosine in DNA + lactate + H(+). It catalyses the reaction an N(2)-(1-hydroxy-2-oxoethyl)-guanosine in RNA + H2O = a guanosine in RNA + glycolate + H(+). The enzyme catalyses an N(2)-(1-hydroxy-2-oxoethyl)-2'-deoxyguanosine in DNA + H2O = a 2'-deoxyguanosine in DNA + glycolate + H(+). In terms of biological role, multifunctional protein with controversial molecular function which plays an important role in cell protection against oxidative stress and cell death acting as oxidative stress sensor and redox-sensitive chaperone and protease. It is involved in neuroprotective mechanisms like the stabilization of NFE2L2 and PINK1 proteins, male fertility as a positive regulator of androgen signaling pathway as well as cell growth and transformation through, for instance, the modulation of NF-kappa-B signaling pathway. Has been described as a protein and nucleotide deglycase that catalyzes the deglycation of the Maillard adducts formed between amino groups of proteins or nucleotides and reactive carbonyl groups of glyoxals. But this function is rebuted by other works. As a protein deglycase, repairs methylglyoxal- and glyoxal-glycated proteins, and releases repaired proteins and lactate or glycolate, respectively. Deglycates cysteine, arginine and lysine residues in proteins, and thus reactivates these proteins by reversing glycation by glyoxals. Acts on early glycation intermediates (hemithioacetals and aminocarbinols), preventing the formation of advanced glycation endproducts (AGE) that cause irreversible damage. Also functions as a nucleotide deglycase able to repair glycated guanine in the free nucleotide pool (GTP, GDP, GMP, dGTP) and in DNA and RNA. Is thus involved in a major nucleotide repair system named guanine glycation repair (GG repair), dedicated to reversing methylglyoxal and glyoxal damage via nucleotide sanitization and direct nucleic acid repair. Protects histones from adduction by methylglyoxal, controls the levels of methylglyoxal-derived argininine modifications on chromatin. Able to remove the glycations and restore histone 3, histone glycation disrupts both local and global chromatin architecture by altering histone-DNA interactions as well as histone acetylation and ubiquitination levels. Displays a very low glyoxalase activity that may reflect its deglycase activity. Eliminates hydrogen peroxide and protects cells against hydrogen peroxide-induced cell death. Required for correct mitochondrial morphology and function as well as for autophagy of dysfunctional mitochondria. Plays a role in regulating expression or stability of the mitochondrial uncoupling proteins SLC25A14 and SLC25A27 in dopaminergic neurons of the substantia nigra pars compacta and attenuates the oxidative stress induced by calcium entry into the neurons via L-type channels during pacemaking. Regulates astrocyte inflammatory responses, may modulate lipid rafts-dependent endocytosis in astrocytes and neuronal cells. In pancreatic islets, involved in the maintenance of mitochondrial reactive oxygen species (ROS) levels and glucose homeostasis in an age- and diet dependent manner. Protects pancreatic beta cells from cell death induced by inflammatory and cytotoxic setting. Binds to a number of mRNAs containing multiple copies of GG or CC motifs and partially inhibits their translation but dissociates following oxidative stress. Metal-binding protein able to bind copper as well as toxic mercury ions, enhances the cell protection mechanism against induced metal toxicity. In macrophages, interacts with the NADPH oxidase subunit NCF1 to direct NADPH oxidase-dependent ROS production, and protects against sepsis. In Homo sapiens (Human), this protein is Parkinson disease protein 7.